Here is a 1006-residue protein sequence, read N- to C-terminus: Pentatricopeptide repeat-containing protein At1g30610, chloroplastic (1006 aa).

The N-terminal 40 residues, 1–40 (MAVTISTNAFVNASLLDESRNSFWRPLFHQPYYNCRRVVR), are a transit peptide targeting the chloroplast. Disordered stretches follow at residues 180–219 (LSKS…ERGS) and 248–292 (SSVA…IARG). The span at 194–219 (ESFRKRYSKQEYHRSSDTSRGIERGS) shows a compositional bias: basic and acidic residues. Residues 254 to 263 (WSNSGESSVT) show a composition bias toward polar residues. Residues 265–284 (PKDESFRRRYSKQEHHRSSD) are compositionally biased toward basic and acidic residues. PPR repeat units follow at residues 468-502 (TDYT…DRYK), 506-536 (IRII…MLLQ), 542-572 (DMVA…MRSP), 592-626 (DVVV…GQKP), 627-657 (SPVT…MQKS), 661-695 (NALA…GIVG), 759-789 (LVVT…MKKV), 793-827 (NLVT…GNHI), 840-874 (DTYT…GYHF), and 875-909 (NAKR…NRIP).

The protein belongs to the PPR family. P subfamily.

The protein resides in the plastid. The protein localises to the chloroplast. May play a role in embryogenesis. This Arabidopsis thaliana (Mouse-ear cress) protein is Pentatricopeptide repeat-containing protein At1g30610, chloroplastic (EMB2279).